A 202-amino-acid polypeptide reads, in one-letter code: Probable molybdenum cofactor guanylyltransferase (202 aa).

GTP-binding positions include 9–11, Lys22, Asn50, Asp77, and Asp102; that span reads VAG. Position 102 (Asp102) interacts with Mg(2+).

It belongs to the MobA family. Mg(2+) serves as cofactor.

The protein localises to the cytoplasm. It carries out the reaction Mo-molybdopterin + GTP + H(+) = Mo-molybdopterin guanine dinucleotide + diphosphate. Its function is as follows. Transfers a GMP moiety from GTP to Mo-molybdopterin (Mo-MPT) cofactor (Moco or molybdenum cofactor) to form Mo-molybdopterin guanine dinucleotide (Mo-MGD) cofactor. The sequence is that of Probable molybdenum cofactor guanylyltransferase from Natronomonas pharaonis (strain ATCC 35678 / DSM 2160 / CIP 103997 / JCM 8858 / NBRC 14720 / NCIMB 2260 / Gabara) (Halobacterium pharaonis).